We begin with the raw amino-acid sequence, 110 residues long: Hydrogenase maturation factor HypA (110 aa).

His-2 lines the Ni(2+) pocket. Residues Cys-70, Cys-73, Cys-86, and Cys-89 each coordinate Zn(2+).

This sequence belongs to the HypA/HybF family.

Involved in the maturation of [NiFe] hydrogenases. Required for nickel insertion into the metal center of the hydrogenase. The chain is Hydrogenase maturation factor HypA from Geotalea daltonii (strain DSM 22248 / JCM 15807 / FRC-32) (Geobacter daltonii).